A 152-amino-acid chain; its full sequence is MSQELRAIVRVGDTDLEGNKQVAYALAKIRGIGIASAYAICWKLGIDPHAVLGALPEEQINKLDWAVRNLHEVAPAWFLNRRKDPETGRDMHLIGSELVLAAKRDVDLMKKLKSWKGIRHSLGLKVRGQRTVTTGRLGAVAGVTKKKATPGK.

It belongs to the universal ribosomal protein uS13 family. Part of the 30S ribosomal subunit. Forms a loose heterodimer with protein S19. Forms two bridges to the 50S subunit in the 70S ribosome.

Located at the top of the head of the 30S subunit, it contacts several helices of the 16S rRNA. In the 70S ribosome it contacts the 23S rRNA (bridge B1a) and protein L5 of the 50S subunit (bridge B1b), connecting the 2 subunits; these bridges are implicated in subunit movement. This is Small ribosomal subunit protein uS13 from Pyrobaculum arsenaticum (strain DSM 13514 / JCM 11321 / PZ6).